A 311-amino-acid polypeptide reads, in one-letter code: Thioredoxin reductase (311 aa).

FAD-binding positions include 15-18 (SGPA), 37-44 (EGTQFGGA), asparagine 53, and valine 86. An intrachain disulfide couples cysteine 137 to cysteine 140. NADP(+)-binding residues include serine 158, histidine 177, arginine 183, isoleucine 240, and tyrosine 260. Residues aspartate 280 and 287-290 (RQAI) contribute to the FAD site. Residue arginine 287 participates in NADP(+) binding.

This sequence belongs to the class-II pyridine nucleotide-disulfide oxidoreductase family. Homodimer. It depends on FAD as a cofactor.

Its subcellular location is the cytoplasm. It carries out the reaction [thioredoxin]-dithiol + NADP(+) = [thioredoxin]-disulfide + NADPH + H(+). The chain is Thioredoxin reductase from Mycolicibacterium smegmatis (Mycobacterium smegmatis).